We begin with the raw amino-acid sequence, 59 residues long: UPF0391 membrane protein GbCGDNIH1_2123 (59 aa).

The next 2 helical transmembrane spans lie at 6–26 and 35–55; these read LALF…TGIS and ILFV…LAAG.

The protein belongs to the UPF0391 family.

It localises to the cell membrane. The chain is UPF0391 membrane protein GbCGDNIH1_2123 from Granulibacter bethesdensis (strain ATCC BAA-1260 / CGDNIH1).